The primary structure comprises 241 residues: MFLTRSEYDRGVNTFSPEGRLFQVEYAIEAIKLGSTAIGIQTSEGVCLAVEKRITSPLMEPSSIEKIVEIDAHIGCAMSGLIADAKTLIDKARVETQNHWFTYNETMTVESVTQAVSNLALQFGEEDADPGAMSRPFGVALLFGGVDEKGPQLFHMDPSGTFVQCDARAIGSASEGAQSSLQEVYHKSMTLKEAIKSSLIILKQVMEEKLNATNIELATVQPGQNFHMFTKEELEEVIKDI.

Residue M1 is modified to N-acetylmethionine. Phosphoserine is present on S16. T55 is subject to Phosphothreonine. Residues S56 and S63 each carry the phosphoserine modification. An O-linked (GlcNAc) serine glycan is attached at S198.

The protein belongs to the peptidase T1A family. In terms of assembly, the 26S proteasome consists of a 20S proteasome core and two 19S regulatory subunits. The 20S proteasome core is a barrel-shaped complex made of 28 subunits that are arranged in four stacked rings. The two outer rings are each formed by seven alpha subunits, and the two inner rings are formed by seven beta subunits. The proteolytic activity is exerted by three beta-subunits PSMB5, PSMB6 and PSMB7. PSMA5 interacts directly with the PSMG1-PSMG2 heterodimer which promotes 20S proteasome assembly.

It is found in the cytoplasm. Its subcellular location is the nucleus. Component of the 20S core proteasome complex involved in the proteolytic degradation of most intracellular proteins. This complex plays numerous essential roles within the cell by associating with different regulatory particles. Associated with two 19S regulatory particles, forms the 26S proteasome and thus participates in the ATP-dependent degradation of ubiquitinated proteins. The 26S proteasome plays a key role in the maintenance of protein homeostasis by removing misfolded or damaged proteins that could impair cellular functions, and by removing proteins whose functions are no longer required. Associated with the PA200 or PA28, the 20S proteasome mediates ubiquitin-independent protein degradation. This type of proteolysis is required in several pathways including spermatogenesis (20S-PA200 complex) or generation of a subset of MHC class I-presented antigenic peptides (20S-PA28 complex). The chain is Proteasome subunit alpha type-5 (PSMA5) from Bos taurus (Bovine).